A 141-amino-acid chain; its full sequence is Nucleoside diphosphate kinase (141 aa).

6 residues coordinate ATP: lysine 11, phenylalanine 59, arginine 87, threonine 93, arginine 104, and asparagine 114. The active-site Pros-phosphohistidine intermediate is the histidine 117.

This sequence belongs to the NDK family. In terms of assembly, homotetramer. It depends on Mg(2+) as a cofactor.

It is found in the cytoplasm. It carries out the reaction a 2'-deoxyribonucleoside 5'-diphosphate + ATP = a 2'-deoxyribonucleoside 5'-triphosphate + ADP. It catalyses the reaction a ribonucleoside 5'-diphosphate + ATP = a ribonucleoside 5'-triphosphate + ADP. Its function is as follows. Major role in the synthesis of nucleoside triphosphates other than ATP. The ATP gamma phosphate is transferred to the NDP beta phosphate via a ping-pong mechanism, using a phosphorylated active-site intermediate. This chain is Nucleoside diphosphate kinase, found in Polynucleobacter necessarius subsp. necessarius (strain STIR1).